Here is a 308-residue protein sequence, read N- to C-terminus: Probable manganese-dependent inorganic pyrophosphatase (308 aa).

The Mn(2+) site is built by histidine 9, aspartate 13, aspartate 15, aspartate 75, histidine 97, and aspartate 149.

Belongs to the PPase class C family. The cofactor is Mn(2+).

It is found in the cytoplasm. The enzyme catalyses diphosphate + H2O = 2 phosphate + H(+). This chain is Probable manganese-dependent inorganic pyrophosphatase, found in Listeria monocytogenes serotype 4b (strain CLIP80459).